We begin with the raw amino-acid sequence, 198 residues long: Putative NADH dehydrogenase/NAD(P)H nitroreductase XOO4267 (198 aa).

Belongs to the nitroreductase family. HadB/RutE subfamily. It depends on FMN as a cofactor.

The sequence is that of Putative NADH dehydrogenase/NAD(P)H nitroreductase XOO4267 from Xanthomonas oryzae pv. oryzae (strain KACC10331 / KXO85).